A 748-amino-acid chain; its full sequence is Semaphorin-3B (748 aa).

The N-terminal stretch at 1–25 (MGRAEAAAMIPGLALLWVAGLGDTA) is a signal peptide. The Sema domain maps to 30–512 (RLRLSFQELQ…SRSAVAQIAL (483 aa)). N-linked (GlcNAc...) asparagine glycosylation is present at Asn82. Cys102 and Cys113 are disulfide-bonded. N-linked (GlcNAc...) asparagine glycosylation occurs at Asn124. 5 cysteine pairs are disulfide-bonded: Cys131-Cys140, Cys268-Cys379, Cys292-Cys339, Cys515-Cys533, and Cys643-Cys709. The 99-residue stretch at 561–659 (PSTLCSGDSS…FSQPLRRLVL (99 aa)) folds into the Ig-like C2-type domain. Residues 708 to 748 (MCRPQPGHHSVAADSRRKGRNRRMHVSELRAERGPRSAAHW) form a disordered region. A compositionally biased stretch (basic and acidic residues) spans 732–742 (HVSELRAERGP).

It belongs to the semaphorin family.

Its subcellular location is the secreted. In terms of biological role, inhibits axonal extension by providing local signals to specify territories inaccessible for growing axons. The protein is Semaphorin-3B (Sema3b) of Mus musculus (Mouse).